Here is a 673-residue protein sequence, read N- to C-terminus: Probable lysophospholipase 4 (673 aa).

The N-terminal stretch at 1–19 (MYVNYIGLFAFVQISLTLA) is a signal peptide. N-linked (GlcNAc...) asparagine glycans are attached at residues Asn-72, Asn-125, Asn-191, Asn-194, Asn-272, Asn-301, Asn-374, Asn-404, Asn-409, Asn-481, Asn-516, Asn-545, and Asn-574. Residues 74 to 615 (TCSNDNLLRP…QEYCWDGTLA (542 aa)) form the PLA2c domain. The tract at residues 631-653 (TTSRAPSGTTSGTASSTTSSSVA) is disordered.

Belongs to the lysophospholipase family.

The protein resides in the secreted. It catalyses the reaction a 1-acyl-sn-glycero-3-phosphocholine + H2O = sn-glycerol 3-phosphocholine + a fatty acid + H(+). Catalyzes the release of fatty acids from lysophospholipids. In Schizosaccharomyces pombe (strain 972 / ATCC 24843) (Fission yeast), this protein is Probable lysophospholipase 4 (plb4).